A 456-amino-acid chain; its full sequence is N(6)-adenosine-methyltransferase non-catalytic subunit METTL14 (456 aa).

A disordered region spans residues 43–74 (EIAETRETSRASYDTSAAVSKRKLPEEGKADE). Basic and acidic residues predominate over residues 65 to 74 (KLPEEGKADE). Interaction with METTL3 stretches follow at residues 135-136 (RD) and 237-238 (SG). Positions 245 to 254 (RMCLRKWGFR) are positively charged region required for RNA-binding. Interaction with METTL3 stretches follow at residues 255–258 (RSED) and 278–287 (KAIFQRTKEH). The positively charged region required for RNA-binding stretch occupies residues 297-298 (HR). An interaction with METTL3 region spans residues 308 to 312 (NVDID). Positions 395-456 (LRPKTPPPKS…GPHRGVFAPR (62 aa)) are disordered. The span at 410–421 (ASRGGGRGGASA) shows a compositional bias: gly residues. Positions 423–441 (RGERGRERNRGSFRGDRGN) are enriched in basic and acidic residues.

It belongs to the MT-A70-like family. As to quaternary structure, heterodimer; heterodimerizes with mettl3 to form an antiparallel heterodimer that constitutes an active methyltransferase. Component of the WMM complex, a N6-methyltransferase complex composed of a catalytic subcomplex, named MAC, and of an associated subcomplex, named MACOM. The MAC subcomplex is composed of mettl3 and mettl14.

It is found in the nucleus. The METTL3-METTL14 heterodimer forms a N6-methyltransferase complex that methylates adenosine residues at the N(6) position of some mRNAs and regulates the circadian clock, differentiation of embryonic stem cells and cortical neurogenesis. In the heterodimer formed with mettl3, mettl14 constitutes the RNA-binding scaffold that recognizes the substrate rather than the catalytic core. N6-methyladenosine (m6A), which takes place at the 5'-[AG]GAC-3' consensus sites of some mRNAs, plays a role in mRNA stability and processing. This is N(6)-adenosine-methyltransferase non-catalytic subunit METTL14 (mettl14) from Xenopus laevis (African clawed frog).